The chain runs to 249 residues: Proteasome subunit alpha type-4 (249 aa).

This sequence belongs to the peptidase T1A family. In terms of assembly, the 26S proteasome consists of a 20S proteasome core and two 19S regulatory subunits. The 20S proteasome core is composed of 28 subunits that are arranged in four stacked rings, resulting in a barrel-shaped structure. The two end rings are each formed by seven alpha subunits, and the two central rings are each formed by seven beta subunits. The catalytic chamber with the active sites is on the inside of the barrel.

Its subcellular location is the cytoplasm. It is found in the nucleus. Functionally, the proteasome is a multicatalytic proteinase complex which is characterized by its ability to cleave peptides with Arg, Phe, Tyr, Leu, and Glu adjacent to the leaving group at neutral or slightly basic pH. The proteasome has an ATP-dependent proteolytic activity. In Petunia hybrida (Petunia), this protein is Proteasome subunit alpha type-4 (PAC1).